The following is a 444-amino-acid chain: N-succinylarginine dihydrolase (444 aa).

Substrate-binding positions include 19-28 (AGLSFGNVAS), N110, and 137-138 (HR). Residue E174 is part of the active site. R214 provides a ligand contact to substrate. Residue H250 is part of the active site. Substrate is bound by residues D252 and N362. C368 (nucleophile) is an active-site residue.

This sequence belongs to the succinylarginine dihydrolase family. As to quaternary structure, homodimer.

The enzyme catalyses N(2)-succinyl-L-arginine + 2 H2O + 2 H(+) = N(2)-succinyl-L-ornithine + 2 NH4(+) + CO2. Its pathway is amino-acid degradation; L-arginine degradation via AST pathway; L-glutamate and succinate from L-arginine: step 2/5. In terms of biological role, catalyzes the hydrolysis of N(2)-succinylarginine into N(2)-succinylornithine, ammonia and CO(2). This is N-succinylarginine dihydrolase from Shewanella baltica (strain OS155 / ATCC BAA-1091).